Here is a 356-residue protein sequence, read N- to C-terminus: Protein RecA (356 aa).

Residue 67-74 (GPESSGKT) participates in ATP binding.

The protein belongs to the RecA family.

It is found in the cytoplasm. Can catalyze the hydrolysis of ATP in the presence of single-stranded DNA, the ATP-dependent uptake of single-stranded DNA by duplex DNA, and the ATP-dependent hybridization of homologous single-stranded DNAs. It interacts with LexA causing its activation and leading to its autocatalytic cleavage. In Yersinia pseudotuberculosis serotype I (strain IP32953), this protein is Protein RecA.